The chain runs to 367 residues: Phosphoribosylaminoimidazole-succinocarboxamide synthase (367 aa).

The protein belongs to the SAICAR synthetase family.

It catalyses the reaction 5-amino-1-(5-phospho-D-ribosyl)imidazole-4-carboxylate + L-aspartate + ATP = (2S)-2-[5-amino-1-(5-phospho-beta-D-ribosyl)imidazole-4-carboxamido]succinate + ADP + phosphate + 2 H(+). Its pathway is purine metabolism; IMP biosynthesis via de novo pathway; 5-amino-1-(5-phospho-D-ribosyl)imidazole-4-carboxamide from 5-amino-1-(5-phospho-D-ribosyl)imidazole-4-carboxylate: step 1/2. The chain is Phosphoribosylaminoimidazole-succinocarboxamide synthase from Vibrio atlanticus (strain LGP32) (Vibrio splendidus (strain Mel32)).